The sequence spans 555 residues: Glucose-6-phosphate isomerase (555 aa).

Residues 169-170 (GS), 219-224 (SKTFTT), glutamine 364, glutamate 368, histidine 399, and lysine 521 each bind D-glucose 6-phosphate. The Proton donor role is filled by glutamate 368. Residues histidine 399 and lysine 521 contribute to the active site.

Belongs to the GPI family. As to quaternary structure, homodimer.

Its subcellular location is the cytoplasm. The protein localises to the cytosol. It catalyses the reaction alpha-D-glucose 6-phosphate = beta-D-fructose 6-phosphate. It functions in the pathway carbohydrate degradation; glycolysis; D-glyceraldehyde 3-phosphate and glycerone phosphate from D-glucose: step 2/4. In terms of biological role, in the cytoplasm, catalyzes the conversion of glucose-6-phosphate to fructose-6-phosphate, the second step in glycolysis, and the reverse reaction during gluconeogenesis. The protein is Glucose-6-phosphate isomerase (RAG2) of Kluyveromyces lactis (strain ATCC 8585 / CBS 2359 / DSM 70799 / NBRC 1267 / NRRL Y-1140 / WM37) (Yeast).